A 217-amino-acid polypeptide reads, in one-letter code: 3-demethoxyubiquinol 3-hydroxylase (217 aa).

Positions 66, 96, 99, 148, 180, and 183 each coordinate Fe cation.

It belongs to the COQ7 family. Requires Fe cation as cofactor.

The protein localises to the cell membrane. The catalysed reaction is a 5-methoxy-2-methyl-3-(all-trans-polyprenyl)benzene-1,4-diol + AH2 + O2 = a 3-demethylubiquinol + A + H2O. It participates in cofactor biosynthesis; ubiquinone biosynthesis. Its function is as follows. Catalyzes the hydroxylation of 2-nonaprenyl-3-methyl-6-methoxy-1,4-benzoquinol during ubiquinone biosynthesis. The chain is 3-demethoxyubiquinol 3-hydroxylase from Ralstonia pickettii (strain 12J).